The following is a 365-amino-acid chain: Cobalt-precorrin-5B C(1)-methyltransferase (365 aa).

It belongs to the CbiD family.

It carries out the reaction Co-precorrin-5B + S-adenosyl-L-methionine = Co-precorrin-6A + S-adenosyl-L-homocysteine. It functions in the pathway cofactor biosynthesis; adenosylcobalamin biosynthesis; cob(II)yrinate a,c-diamide from sirohydrochlorin (anaerobic route): step 6/10. Its function is as follows. Catalyzes the methylation of C-1 in cobalt-precorrin-5B to form cobalt-precorrin-6A. The polypeptide is Cobalt-precorrin-5B C(1)-methyltransferase (Methanococcus maripaludis (strain DSM 14266 / JCM 13030 / NBRC 101832 / S2 / LL)).